The sequence spans 338 residues: Nucleoid-associated protein PA14_59050 (338 aa).

It belongs to the YejK family.

The protein resides in the cytoplasm. The protein localises to the nucleoid. The chain is Nucleoid-associated protein PA14_59050 from Pseudomonas aeruginosa (strain UCBPP-PA14).